The chain runs to 37 residues: Large ribosomal subunit protein bL36c (37 aa).

The protein belongs to the bacterial ribosomal protein bL36 family.

It localises to the plastid. It is found in the chloroplast. The polypeptide is Large ribosomal subunit protein bL36c (Pinus koraiensis (Korean pine)).